The chain runs to 318 residues: Small ribosomal subunit protein RACK1 (318 aa).

WD repeat units lie at residues 11–44 (GHRGWVTSLACPQTPETATKVVSTSRDKTLLSWG), 65–95 (GHSAFVSDVALSNNGNFAVSASWDHSLRLWN), 107–137 (GHTKDVLSVAFSPDNRQIVSGGRDNALRVWN), 150–182 (AHTDWVSCVRFSPSLDAPVIVSGGWDNLVKVWD), 194–224 (GHTNYVTSVTVSPDGSLCASSDKDGVARLWD), 235–264 (AAGAPINQICFSPNRYWMCAATEKGIRIFD), and 282–315 (KKIVPECVSIAWSADGSTLYSGYTDNVIRVWGVS).

Belongs to the WD repeat G protein beta family. Ribosomal protein RACK1 subfamily.

This chain is Small ribosomal subunit protein RACK1, found in Trypanosoma brucei brucei.